A 222-amino-acid chain; its full sequence is Ribonuclease 3 (222 aa).

One can recognise an RNase III domain in the interval 5-127 (PIKLEKKLKL…LIGAIYLDKG (123 aa)). Residue Glu-41 coordinates Mg(2+). Residue Asp-45 is part of the active site. Mg(2+) contacts are provided by Asp-113 and Glu-116. The active site involves Glu-116. A DRBM domain is found at 152-221 (DAKTKLQEYS…ASLCLQDIFK (70 aa)).

This sequence belongs to the ribonuclease III family. As to quaternary structure, homodimer. Mg(2+) is required as a cofactor.

It localises to the cytoplasm. It carries out the reaction Endonucleolytic cleavage to 5'-phosphomonoester.. Its function is as follows. Digests double-stranded RNA. Involved in the processing of primary rRNA transcript to yield the immediate precursors to the large and small rRNAs (23S and 16S). Processes some mRNAs, and tRNAs when they are encoded in the rRNA operon. Processes pre-crRNA and tracrRNA of type II CRISPR loci if present in the organism. In Pelagibacter ubique (strain HTCC1062), this protein is Ribonuclease 3.